The following is a 238-amino-acid chain: Ribonuclease PH (238 aa).

Phosphate contacts are provided by residues Arg-86 and 124–126 (GTR).

The protein belongs to the RNase PH family. In terms of assembly, homohexameric ring arranged as a trimer of dimers.

The enzyme catalyses tRNA(n+1) + phosphate = tRNA(n) + a ribonucleoside 5'-diphosphate. Functionally, phosphorolytic 3'-5' exoribonuclease that plays an important role in tRNA 3'-end maturation. Removes nucleotide residues following the 3'-CCA terminus of tRNAs; can also add nucleotides to the ends of RNA molecules by using nucleoside diphosphates as substrates, but this may not be physiologically important. Probably plays a role in initiation of 16S rRNA degradation (leading to ribosome degradation) during starvation. The chain is Ribonuclease PH from Mannheimia haemolytica (Pasteurella haemolytica).